We begin with the raw amino-acid sequence, 255 residues long: Imidazole glycerol phosphate synthase subunit HisF (255 aa).

Active-site residues include aspartate 11 and aspartate 130.

Belongs to the HisA/HisF family. Heterodimer of HisH and HisF.

Its subcellular location is the cytoplasm. The enzyme catalyses 5-[(5-phospho-1-deoxy-D-ribulos-1-ylimino)methylamino]-1-(5-phospho-beta-D-ribosyl)imidazole-4-carboxamide + L-glutamine = D-erythro-1-(imidazol-4-yl)glycerol 3-phosphate + 5-amino-1-(5-phospho-beta-D-ribosyl)imidazole-4-carboxamide + L-glutamate + H(+). It functions in the pathway amino-acid biosynthesis; L-histidine biosynthesis; L-histidine from 5-phospho-alpha-D-ribose 1-diphosphate: step 5/9. Functionally, IGPS catalyzes the conversion of PRFAR and glutamine to IGP, AICAR and glutamate. The HisF subunit catalyzes the cyclization activity that produces IGP and AICAR from PRFAR using the ammonia provided by the HisH subunit. The protein is Imidazole glycerol phosphate synthase subunit HisF of Campylobacter lari (strain RM2100 / D67 / ATCC BAA-1060).